The chain runs to 59 residues: Protein QUA-QUINE STARCH (59 aa).

As to expression, expressed in hypocotyls, leaves, vasculature, hydathodes, trichomes, pedicels, sepals, filaments, mature pollen, stigma papillae, styles, siliques, root and shoot tips, but not in shoot meristem, petals or root epidermis.

The protein localises to the cytoplasm. Functionally, involved in regulating carbon and nitrogen allocation to starch and protein. The polypeptide is Protein QUA-QUINE STARCH (Arabidopsis thaliana (Mouse-ear cress)).